The chain runs to 108 residues: Urease subunit beta (108 aa).

This sequence belongs to the urease beta subunit family. As to quaternary structure, probable heterotrimer of UreA (gamma), UreB (beta) and UreC (alpha) subunits. Three heterotrimers associate to form the active enzyme. The trimeric urease interacts with an accessory complex composed of UreD, UreF and UreG, which is required for the assembly of the nickel containing metallocenter of UreC. The UreE protein may also play a direct role in nickel transfer to the urease apoprotein.

It is found in the cytoplasm. It catalyses the reaction urea + 2 H2O + H(+) = hydrogencarbonate + 2 NH4(+). The protein operates within nitrogen metabolism; urea degradation; CO(2) and NH(3) from urea (urease route): step 1/1. In Proteus mirabilis (strain HI4320), this protein is Urease subunit beta.